The primary structure comprises 130 residues: Capsid protein (130 aa).

The interval 31-104 (EWLSNNSRSQ…FAATDDVTVI (74 aa)) is viral RNA-binding.

It belongs to the Leviviricetes capsid protein family. As to quaternary structure, homodimer. The capsid proteins form dimers that assemble by group of 5. Twelve such pentamers are linked together with free dimers. The homodimers binds to the viral RNA via an operator hairpin, but also to many other RNA sequences in the viral genome; this interaction probably shifts the virus from the replicative to the assembly phase and ensures specific encapsidation of the viral genome.

The protein localises to the virion. Capsid protein self-assembles to form an icosahedral capsid with a T=3 symmetry, about 26 nm in diameter, and consisting of 89 capsid proteins dimers (178 capsid proteins). Involved in viral genome encapsidation through the interaction between a capsid protein dimer and the multiple packaging signals present in the RNA genome. The capsid also contains 1 copy of the A2 maturation protein. Functionally, acts as a translational repressor of viral replicase synthesis late in infection. This latter function is the result of capsid protein interaction with an RNA hairpin which contains the replicase ribosome-binding site. In Escherichia coli (Bacteriophage GA), this protein is Capsid protein.